The chain runs to 379 residues: Lipid-A-disaccharide synthase (379 aa).

The protein belongs to the LpxB family.

The catalysed reaction is a lipid X + a UDP-2-N,3-O-bis[(3R)-3-hydroxyacyl]-alpha-D-glucosamine = a lipid A disaccharide + UDP + H(+). It functions in the pathway bacterial outer membrane biogenesis; LPS lipid A biosynthesis. Its function is as follows. Condensation of UDP-2,3-diacylglucosamine and 2,3-diacylglucosamine-1-phosphate to form lipid A disaccharide, a precursor of lipid A, a phosphorylated glycolipid that anchors the lipopolysaccharide to the outer membrane of the cell. This Vibrio campbellii (strain ATCC BAA-1116) protein is Lipid-A-disaccharide synthase.